A 203-amino-acid polypeptide reads, in one-letter code: 3-isopropylmalate dehydratase small subunit (203 aa).

It belongs to the LeuD family. LeuD type 1 subfamily. Heterodimer of LeuC and LeuD.

It carries out the reaction (2R,3S)-3-isopropylmalate = (2S)-2-isopropylmalate. Its pathway is amino-acid biosynthesis; L-leucine biosynthesis; L-leucine from 3-methyl-2-oxobutanoate: step 2/4. Its function is as follows. Catalyzes the isomerization between 2-isopropylmalate and 3-isopropylmalate, via the formation of 2-isopropylmaleate. This Phenylobacterium zucineum (strain HLK1) protein is 3-isopropylmalate dehydratase small subunit.